The chain runs to 865 residues: Envelope glycoprotein gp160 (865 aa).

An N-terminal signal peptide occupies residues 1 to 20; it reads MRYTIITLGIIVIGIGIVLS. Over 21-705 the chain is Extracellular; that stretch reads KQWITVFYGI…SKWLNILKMG (685 aa). Asparagine 35 carries N-linked (GlcNAc...) asparagine; by host glycosylation. Cysteines 42 and 55 form a disulfide. Residues asparagine 68, asparagine 117, asparagine 150, asparagine 165, asparagine 195, asparagine 198, asparagine 210, asparagine 252, asparagine 255, asparagine 266, asparagine 276, asparagine 282, asparagine 294, asparagine 306, asparagine 316, asparagine 373, asparagine 414, asparagine 451, asparagine 488, and asparagine 491 are each glycosylated (N-linked (GlcNAc...) asparagine; by host). Cystine bridges form between cysteine 101/cysteine 218, cysteine 108/cysteine 209, cysteine 113/cysteine 166, cysteine 231/cysteine 261, and cysteine 241/cysteine 253. Positions 113–165 are V1; it reads CVELNSTRERATTPTTTPKSTGLPCVGPTSGENLQSCNASIIEREMEDEPASN. The interval 166 to 209 is V2; it reads CTFAMAGYVRDQKKNYYSVVWNDAEIYCKNKTNSTSKECYMIHC. The V3 stretch occupies residues 311 to 343; the sequence is CRRPGNKTVLPVTIMAGLVFHSQKYNMKLRQAW. A disulfide bond links cysteine 311 and cysteine 344. Cysteines 396 and 471 form a disulfide. The segment at 403-444 is V4; the sequence is CKMDWFLNYLNNKTWDAYHNFCSSKKKGHAPGPCVQRTYVAY. The interval 487–494 is V5; the sequence is KNRTNVTL. A fusion peptide region spans residues 537–557; it reads VPFVLGFLGFLGAAGTAMGAA. The segment at 600 to 616 is immunosuppression; sequence LNARVTALEKYLEDQAR. N-linked (GlcNAc...) asparagine; by host glycosylation is found at asparagine 645 and asparagine 661. Residues 650-675 are a coiled coil; it reads EWERQIADLESNITGQLVKAREQEEK. The MPER; binding to GalCer stretch occupies residues 682-703; it reads KLTSWSDFWSWFDFSKWLNILK. The helical transmembrane segment at 706 to 726 threads the bilayer; it reads FLVIVGIIGLRLLYTVYGCIV. The Cytoplasmic portion of the chain corresponds to 727–865; the sequence is RVRQGYVPLS…VRQGLEEILN (139 aa). The YXXL motif; contains endocytosis signal signature appears at 732 to 735; it reads YVPL. Residues 744-763 form a disordered region; the sequence is VGKGRPDNADEPGEGGDNSR.

In terms of assembly, the mature envelope protein (Env) consists of a homotrimer of non-covalently associated gp120-gp41 heterodimers. The resulting complex protrudes from the virus surface as a spike. Interacts with host CD4 and CCR5. Gp120 also interacts with the C-type lectins CD209/DC-SIGN and CLEC4M/DC-SIGNR (collectively referred to as DC-SIGN(R)). As to quaternary structure, the mature envelope protein (Env) consists of a homotrimer of non-covalently associated gp120-gp41 heterodimers. The resulting complex protrudes from the virus surface as a spike. In terms of processing, specific enzymatic cleavages in vivo yield mature proteins. Envelope glycoproteins are synthesized as an inactive precursor that is heavily N-glycosylated and processed likely by host cell furin in the Golgi to yield the mature SU and TM proteins. The cleavage site between SU and TM requires the minimal sequence [KR]-X-[KR]-R.

It is found in the virion membrane. Its subcellular location is the host cell membrane. The protein localises to the host endosome membrane. In terms of biological role, the surface protein gp120 (SU) attaches the virus to the host lymphoid cell by binding to the primary receptor CD4. This interaction induces a structural rearrangement creating a high affinity binding site for a chemokine coreceptor like CCR5. This peculiar 2 stage receptor-interaction strategy allows gp120 to maintain the highly conserved coreceptor-binding site in a cryptic conformation, protected from neutralizing antibodies. These changes are transmitted to the transmembrane protein gp41 and are thought to activate its fusogenic potential by unmasking its fusion peptide. Functionally, surface protein gp120 (SU) may target the virus to gut-associated lymphoid tissue (GALT) by binding host ITGA4/ITGB7 (alpha-4/beta-7 integrins), a complex that mediates T-cell migration to the GALT. Interaction between gp120 and ITGA4/ITGB7 would allow the virus to enter GALT early in the infection, infecting and killing most of GALT's resting CD4+ T-cells. This T-cell depletion is believed to be the major insult to the host immune system leading to AIDS. The surface protein gp120 is a ligand for CD209/DC-SIGN and CLEC4M/DC-SIGNR, which are respectively found on dendritic cells (DCs), and on endothelial cells of liver sinusoids and lymph node sinuses. These interactions allow capture of viral particles at mucosal surfaces by these cells and subsequent transmission to permissive cells. DCs are professional antigen presenting cells, critical for host immunity by inducing specific immune responses against a broad variety of pathogens. They act as sentinels in various tissues where they take up antigen, process it, and present it to T-cells following migration to lymphoid organs. SIV subverts the migration properties of dendritic cells to gain access to CD4+ T-cells in lymph nodes. Virus transmission to permissive T-cells occurs either in trans (without DCs infection, through viral capture and transmission), or in cis (following DCs productive infection, through the usual CD4-gp120 interaction), thereby inducing a robust infection. In trans infection, bound virions remain infectious over days and it is proposed that they are not degraded, but protected in non-lysosomal acidic organelles within the DCs close to the cell membrane thus contributing to the viral infectious potential during DCs' migration from the periphery to the lymphoid tissues. On arrival at lymphoid tissues, intact virions recycle back to DCs' cell surface allowing virus transmission to CD4+ T-cells. Virion capture also seems to lead to MHC-II-restricted viral antigen presentation, and probably to the activation of SIV-specific CD4+ cells. Its function is as follows. The transmembrane protein gp41 (TM) acts as a class I viral fusion protein. Under the current model, the protein has at least 3 conformational states: pre-fusion native state, pre-hairpin intermediate state, and post-fusion hairpin state. During fusion of viral and target intracellular membranes, the coiled coil regions (heptad repeats) assume a trimer-of-hairpins structure, positioning the fusion peptide in close proximity to the C-terminal region of the ectodomain. The formation of this structure appears to drive apposition and subsequent fusion of viral and target cell membranes. Complete fusion occurs in host cell endosomes. The virus undergoes clathrin-dependent internalization long before endosomal fusion, thus minimizing the surface exposure of conserved viral epitopes during fusion and reducing the efficacy of inhibitors targeting these epitopes. Membranes fusion leads to delivery of the nucleocapsid into the cytoplasm. In terms of biological role, the envelope glycoprotein gp160 precursor down-modulates cell surface CD4 antigen by interacting with it in the endoplasmic reticulum and blocking its transport to the cell surface. Functionally, the gp120-gp41 heterodimer allows rapid transcytosis of the virus through CD4 negative cells such as simple epithelial monolayers of the intestinal, rectal and endocervical epithelial barriers. Both gp120 and gp41 specifically recognize glycosphingolipids galactosyl-ceramide (GalCer) or 3' sulfo-galactosyl-ceramide (GalS) present in the lipid rafts structures of epithelial cells. Binding to these alternative receptors allows the rapid transcytosis of the virus through the epithelial cells. This transcytotic vesicle-mediated transport of virions from the apical side to the basolateral side of the epithelial cells does not involve infection of the cells themselves. The polypeptide is Envelope glycoprotein gp160 (env) (Simian immunodeficiency virus agm.vervet (isolate AGM TYO-1) (SIV-agm.ver)).